The following is a 443-amino-acid chain: Aklavinone 7-beta-L-rhodosaminyltransferase (443 aa).

A signal peptide spans 1–23; the sequence is MRVLLTSFALDAHFNGSVPLAWA.

Belongs to the glycosyltransferase 28 family.

The catalysed reaction is dTDP-beta-L-rhodosamine + aklavinone = aclacinomycin T + dTDP + 2 H(+). With respect to regulation, the activity of AknS is substantially increased by the addition of the accessory protein AknT. In terms of biological role, involved in the biosynthesis of the anthracycline antitumor agent aclacinomycin A. Catalyzes the transfer of the proximal deoxyhexose, L-rhodosamine, from dTDP-beta-L-rhodosamine to the C7-OH of aklavinone aglycone to yield aclacinomycin T (rhodosaminyl-aklavinone). It can also use dTDP-2-deoxy-beta-L-fucose, TDP-2-deoxyfucose, dTDP-4-amino-2-deoxyrhamnose, TDP-L-rhodosamine as sugar donor and epsilon-rhodomycinone as sugar acceptor. The chain is Aklavinone 7-beta-L-rhodosaminyltransferase from Streptomyces galilaeus.